The sequence spans 407 residues: Imidazolonepropionase (407 aa).

Fe(3+) contacts are provided by H68 and H70. Residues H68 and H70 each contribute to the Zn(2+) site. Residues R77, Y140, and H173 each contribute to the 4-imidazolone-5-propanoate site. Y140 serves as a coordination point for N-formimidoyl-L-glutamate. H238 provides a ligand contact to Fe(3+). Residue H238 coordinates Zn(2+). Q241 serves as a coordination point for 4-imidazolone-5-propanoate. Fe(3+) is bound at residue D313. Position 313 (D313) interacts with Zn(2+). Residues N315 and G317 each contribute to the N-formimidoyl-L-glutamate site. T318 contributes to the 4-imidazolone-5-propanoate binding site.

This sequence belongs to the metallo-dependent hydrolases superfamily. HutI family. It depends on Zn(2+) as a cofactor. Fe(3+) serves as cofactor.

Its subcellular location is the cytoplasm. The enzyme catalyses 4-imidazolone-5-propanoate + H2O = N-formimidoyl-L-glutamate. It participates in amino-acid degradation; L-histidine degradation into L-glutamate; N-formimidoyl-L-glutamate from L-histidine: step 3/3. In terms of biological role, catalyzes the hydrolytic cleavage of the carbon-nitrogen bond in imidazolone-5-propanoate to yield N-formimidoyl-L-glutamate. It is the third step in the universal histidine degradation pathway. The sequence is that of Imidazolonepropionase from Burkholderia ambifaria (strain ATCC BAA-244 / DSM 16087 / CCUG 44356 / LMG 19182 / AMMD) (Burkholderia cepacia (strain AMMD)).